We begin with the raw amino-acid sequence, 319 residues long: Protein sprouty homolog 1 (319 aa).

Met1 carries the post-translational modification N-acetylmethionine. A disordered region spans residues 54 to 157 (TEGPSVVKRP…HRSERAIRTQ (104 aa)). A compositionally biased stretch (basic and acidic residues) spans 69–79 (PRQEKHERTHE). Residues 112-131 (SRSTSTGSAASSGSNSSASS) show a composition bias toward low complexity. The SPR domain occupies 183 to 295 (QCGKCKCGEC…CYDWIHRPGC (113 aa)).

This sequence belongs to the sprouty family. In terms of assembly, forms heterodimers with SPRY2. Interacts with TESK1. Interacts with CAV1 (via C-terminus).

It localises to the cytoplasm. Its subcellular location is the membrane. In terms of biological role, inhibits fibroblast growth factor (FGF)-induced retinal lens fiber differentiation, probably by inhibiting FGF-mediated phosphorylation of ERK1/2. Inhibits TGFB-induced epithelial-to-mesenchymal transition in lens epithelial cells. The protein is Protein sprouty homolog 1 (SPRY1) of Bos taurus (Bovine).